The primary structure comprises 89 residues: MKPWILLLVMFISGVVMLLPVLGSFWNKDPFLDMIRETEQCWVQPPYKYCEKRCTKIMTCVRPNHTCCWTYCGNICLDNEEPLKSMLNP.

A signal peptide spans Met1–Gly23.

It localises to the secreted. This chain is Protein WFDC9 (WFDC9), found in Homo sapiens (Human).